Here is a 63-residue protein sequence, read N- to C-terminus: 2-hydroxymuconate tautomerase (63 aa).

Residue Pro-2 is the Proton acceptor; via imino nitrogen of the active site.

It belongs to the 4-oxalocrotonate tautomerase family. Homohexamer.

It catalyses the reaction (2Z,4E)-2-hydroxyhexa-2,4-dienedioate = (3E)-2-oxohex-3-enedioate. Its pathway is aromatic compound metabolism; salicylate degradation. Functionally, catalyzes the ketonization of 2-hydroxymuconate stereoselectively to yield 2-oxo-3-hexenedioate. The polypeptide is 2-hydroxymuconate tautomerase (tdnL) (Pseudomonas putida (Arthrobacter siderocapsulatus)).